A 1187-amino-acid chain; its full sequence is Roquin-2 (1187 aa).

Residues C14, C17, C33, H35, C38, C50, and D53 each contribute to the Zn(2+) site. The RING-type; degenerate zinc-finger motif lies at 14-54 (CPICYNEFDENVHKPISLGCSHTVCKTCLNKLHRKACPFDQ). The HEPN-N stretch occupies residues 91–170 (ENKHYEVAKK…RTVTELILQH (80 aa)). The interval 171-325 (QNPQQLSANL…SIIDKLQSPE (155 aa)) is ROQ. The segment at 326 to 396 (SFAKSVQELT…GLVDFIQNYS (71 aa)) is HEPN-C. Residues 410 to 438 (KYKTSMCRDLRQQGGCPRGTNCTFAHSQE) form a C3H1-type zinc finger. 2 disordered regions span residues 527 to 571 (VGTN…GTEL) and 640 to 677 (NVPESSLPPASMPYADHYSTFSPRDRMNSSPYQPPPPQ). The span at 529–545 (TNAQNAGPSAESVSENK) shows a compositional bias: polar residues. A Phosphoserine modification is found at S548. A compositionally biased stretch (polar residues) spans 553-571 (PVSNAAATSAGPSNFGTEL). Residues S806, S981, and S1115 each carry the phosphoserine modification.

In terms of assembly, interacts with EDC4. Interacts with CCR4-NOT deadenylase complex. Interacts with MAP3K5; the interaction is probably stimulus-dependent. Post-translationally, proteolytically cleaved by MALT1 in activated CD4(+) T cells; cleavage at Arg-509 is critical for promoting RC3H1 degradation in response to T-cell receptor (TCR) stimulation, and hence is necessary for prolonging the stability of a set of mRNAs controlling Th17 cell differentiation. As to expression, highest levels in lymph node and thymus and slightly lesser amounts in brain, lung, and spleen (at protein level). Very weak expression in heart, muscle, and kidney (at protein level). Expressed in CD4(+) helper T-cells (at protein level).

Its subcellular location is the cytoplasm. It is found in the P-body. It carries out the reaction S-ubiquitinyl-[E2 ubiquitin-conjugating enzyme]-L-cysteine + [acceptor protein]-L-lysine = [E2 ubiquitin-conjugating enzyme]-L-cysteine + N(6)-ubiquitinyl-[acceptor protein]-L-lysine.. The protein operates within protein modification; protein ubiquitination. Binding to dsRNA, but not CDE RNA, crosstalks with the E3 ubiquitin ligase activity and may inhibit ubiquitination. Post-transcriptional repressor of mRNAs containing a conserved stem loop motif, called constitutive decay element (CDE), which is often located in the 3'-UTR, as in HMGXB3, ICOS, IER3, NFKBID, NFKBIZ, PPP1R10, TNF and in many more mRNAs. Binds to CDE and promotes mRNA deadenylation and degradation. This process does not involve miRNAs. In follicular helper T (Tfh) cells, represses of ICOS and TNFRSF4 expression, thus preventing spontaneous Tfh cell differentiation, germinal center B-cell differentiation in the absence of immunization and autoimmunity. In resting or LPS-stimulated macrophages, controls inflammation by suppressing TNF expression. Also recognizes CDE in its own mRNA and in that of paralogous RC3H1, possibly leading to feedback loop regulation. Inhibits cooperatively with ZC3H12A the differentiation of helper T cells Th17 in lungs. They repress target mRNA encoding the Th17 cell-promoting factors IL6, ICOS, REL, IRF4, NFKBID and NFKBIZ. The cooperation requires RNA-binding by RC3H1 and the nuclease activity of ZC3H12A. miRNA-binding protein that regulates microRNA homeostasis. Enhances DICER-mediated processing of pre-MIR146a but reduces mature MIR146a levels through an increase of 3' end uridylation. Both inhibits ICOS mRNA expression and they may act together to exert the suppression. Acts as a ubiquitin E3 ligase. Pairs with E2 enzymes UBE2B, UBE2D2, UBE2E2, UBE2E3, UBE2G2, UBE2K and UBE2Q2 and produces polyubiquitin chains. Shows the strongest activity when paired with UBE2N:UBE2V1 or UBE2N:UBE2V2 E2 complexes and generate both short and long polyubiquitin chains. Involved in the ubiquitination of MAP3K5. Able to interact with double-stranded RNA (dsRNA). The chain is Roquin-2 (Rc3h2) from Mus musculus (Mouse).